The sequence spans 567 residues: Lipase maturation factor 1 (567 aa).

Residues 1–39 are disordered; sequence MRPDSPTMAAPAESLRRRKTGYSDPEPESPPAPGRGPAG. Topologically, residues 1–49 are cytoplasmic; sequence MRPDSPTMAAPAESLRRRKTGYSDPEPESPPAPGRGPAGSPAHLHTGTF. The helical transmembrane segment at 50-72 threads the bilayer; that stretch reads WLTRIVLLKALAFVYFVAFLVAF. Residues 73–127 lie on the Lumenal side of the membrane; sequence HQNKQLIGDRGLLPCRVFLKNFQQYFQDRTSWEVFSYMPTILWLMDWSDMNSNLD. A helical transmembrane segment spans residues 128-151; that stretch reads LLALLGLGISSFVLITGCANMLLM. Residues 152–207 lie on the Cytoplasmic side of the membrane; sequence AALWGLYMSLVNVGHVWYSFGWESQLLETGFLGIFLCPLWTLSRLPQHTPTSRIVL. The chain crosses the membrane as a helical span at residues 208-221; it reads WGFRWLIFRIMLGA. Residues 222–292 are Lumenal-facing; the sequence is GLIKIRGDRC…LGRRACIIHG (71 aa). A helical transmembrane segment spans residues 293–321; sequence VLQILFQAVLIVSGNLSFLNWLTMVPSLA. Over 322-367 the chain is Cytoplasmic; the sequence is CFDDATLGFLFPSGPGSLKDRVLQMQRDIRGARPEPRFGSVVRRAA. The chain crosses the membrane as a helical span at residues 368–388; sequence NVSLGVLLAWLSVPVVLNLLS. The Lumenal segment spans residues 389–567; sequence SRQVMNTHFN…DRGWPLPGPL (179 aa).

The protein belongs to the lipase maturation factor family. Interacts with LPL and SEL1L.

It is found in the endoplasmic reticulum membrane. Involved in the maturation of specific proteins in the endoplasmic reticulum. Required for maturation and transport of active lipoprotein lipase (LPL) through the secretory pathway. Each LMF1 molecule chaperones 50 or more molecules of LPL. The chain is Lipase maturation factor 1 (LMF1) from Homo sapiens (Human).